Consider the following 339-residue polypeptide: Annexin A2 (339 aa).

Ser2 carries the post-translational modification N-acetylserine. Positions 2–24 (STVHEILCKLSLEGDHSTPPSAY) are S100A10-binding site. Tyr24 is subject to Phosphotyrosine; by SRC. Ser26 carries the phosphoserine; by PKC modification. Annexin repeat units follow at residues 33–104 (FDAE…GLLK) and 105–176 (TPAQ…ALAK). Residue Lys49 is modified to N6-acetyllysine; alternate. Lys49 participates in a covalent cross-link: Glycyl lysine isopeptide (Lys-Gly) (interchain with G-Cter in SUMO1); alternate. Lys49 is covalently cross-linked (Glycyl lysine isopeptide (Lys-Gly) (interchain with G-Cter in SUMO2); alternate). Lys152 carries the N6-acetyllysine modification. Phosphoserine is present on Ser184. 2 Annexin repeats span residues 189–261 (ELID…NLVQ) and 265–336 (NKPL…YLCG). Tyr199 is modified (phosphotyrosine). An N6-acetyllysine modification is found at Lys227.

It belongs to the annexin family. As to quaternary structure, heterotetramer containing 2 light chains of S100A10/p11 and 2 heavy chains of ANXA2/p36. Interacts with ATP1B1. Interacts with DYSF. Interacts with COCH. Interacts (via repeat Annexin 1) with PCSK9 (via the C-terminal domain); the interaction inhibits the degradation of LDLR. Interacts with CEACAM1 (via the cytoplasmic domain); this interaction is regulated by phosphorylation of CEACAM1. Interacts with APPL2 and APPL1; targets APPL2 to endosomes and acting in parallel to RAB5A. Interacts with S100A4. May interact with UBAP2. Interacts with PLEKHG4B; this interaction is required for PLEKHG4B localization to cell-cell adhesions. In terms of processing, ISGylated.

The protein resides in the secreted. The protein localises to the extracellular space. Its subcellular location is the extracellular matrix. It is found in the basement membrane. It localises to the melanosome. Calcium-regulated membrane-binding protein whose affinity for calcium is greatly enhanced by anionic phospholipids. It binds two calcium ions with high affinity. May be involved in heat-stress response. Inhibits PCSK9-enhanced LDLR degradation, probably reduces PCSK9 protein levels via a translational mechanism but also competes with LDLR for binding with PCSK9. Binds to endosomes damaged by phagocytosis of particulate wear debris and participates in endosomal membrane stabilization, thereby limiting NLRP3 inflammasome activation. Required for endothelial cell surface plasmin generation and may support fibrinolytic surveillance and neoangiogenesis. This is Annexin A2 (ANXA2) from Bos taurus (Bovine).